The primary structure comprises 396 residues: MSVRLVLAKGREKSLLRRHPWVFSGAVARMEGKAAPGETIDIVDHQGKWLARAALSPASQIRARVWTFDPNETIDIAFFTRRLQQAQQWRDWLAKKDGLDSYRLIAGESDGLPGVTIDRFGNFLVLQLLSAGAEYQRPALVSALQALYPECAIYDRSDVAVRKKEGMELAQGPVSGELPPDLLAIEEHGMKLLVDIKGGHKTGYYLDQRDSRFATRRYVEDKRVLNCFSYTGGFAVSALMGGCRQVISVDTSQDALDVAKQNVELNKLDLSKAEFVRDDVFKLLRKYRDQGETFDVIVMDPPKFVENKSQLQGACRGYKDINMLAIQLLNPGGILLTFSCSGLMTTDLFQKIVADAATDAGRDVQFIEQFRQAADHPVIASYPEGLYLKGFACHVM.

The region spanning 2-81 is the PUA domain; sequence SVRLVLAKGR…ETIDIAFFTR (80 aa).

This sequence belongs to the methyltransferase superfamily. RlmI family.

Its subcellular location is the cytoplasm. The catalysed reaction is cytidine(1962) in 23S rRNA + S-adenosyl-L-methionine = 5-methylcytidine(1962) in 23S rRNA + S-adenosyl-L-homocysteine + H(+). Functionally, specifically methylates the cytosine at position 1962 (m5C1962) of 23S rRNA. The protein is Ribosomal RNA large subunit methyltransferase I of Cronobacter sakazakii (strain ATCC BAA-894) (Enterobacter sakazakii).